We begin with the raw amino-acid sequence, 177 residues long: Peptide methionine sulfoxide reductase MsrA (177 aa).

Residue cysteine 14 is part of the active site.

The protein belongs to the MsrA Met sulfoxide reductase family.

The enzyme catalyses L-methionyl-[protein] + [thioredoxin]-disulfide + H2O = L-methionyl-(S)-S-oxide-[protein] + [thioredoxin]-dithiol. It carries out the reaction [thioredoxin]-disulfide + L-methionine + H2O = L-methionine (S)-S-oxide + [thioredoxin]-dithiol. Functionally, has an important function as a repair enzyme for proteins that have been inactivated by oxidation. Catalyzes the reversible oxidation-reduction of methionine sulfoxide in proteins to methionine. The polypeptide is Peptide methionine sulfoxide reductase MsrA (Bacillus velezensis (strain DSM 23117 / BGSC 10A6 / LMG 26770 / FZB42) (Bacillus amyloliquefaciens subsp. plantarum)).